The sequence spans 98 residues: N(2)-fixation sustaining protein CowN (98 aa).

The protein belongs to the CowN family.

Its function is as follows. Is required to sustain N(2)-dependent growth in the presence of low levels of carbon monoxide (CO). Probably acts by protecting the N(2) fixation ability of the nitrogenase complex, which is inactivated in the presence of CO. In Trichlorobacter lovleyi (strain ATCC BAA-1151 / DSM 17278 / SZ) (Geobacter lovleyi), this protein is N(2)-fixation sustaining protein CowN.